The sequence spans 504 residues: MSTAMPGAFSPPRGLADLPLCPVYSRLGRPFHQPVAATSLPEPRMVHFNAALAGELGFGPEAGPQLLEILAGNRPWPGYASSASVYAGHQFGAWVPQLGDGRALLIAEVRTPARERVELQLKGAGPTPYSRGLDGRAVLRSSIREYLASEAMHALGVPTTRCLSLVASPQPVARETVESAAVVCRAAASFVRFGQFEYFAGRGQTEPMARLADHVIAEHFPHLQGHPERHAAWLGEVIERTARLIAQWQLLGFCHGVMNTDNFSVLGLTLDYGPFGFMDRFRWYHVCNHSDYEGRYAYRAQPEVGRWNCERLLQAVSPLLADAPGRAAEIGQDLLRRYASVYHRAVMRGWADKLGLREVRETDAGLIDEFLGLLQRGRGDFTRSFRLLGRIRTDSDAPARGVREAFADINAFDAWVADYRTRLRSEQNVDDEARAGRMNRVNPKYVLRNHLAQIAIDKAMLGDYSEVARLAELLRRPYDEQPDMEAYAAEPPDYMRNIEVSCSS.

ATP contacts are provided by Gly-99, Gly-101, Arg-102, Lys-122, Asp-134, Gly-135, Arg-185, and Arg-192. The Proton acceptor role is filled by Asp-261. Mg(2+) is bound by residues Asn-262 and Asp-271. Asp-271 lines the ATP pocket.

It belongs to the SELO family. Requires Mg(2+) as cofactor. The cofactor is Mn(2+).

It carries out the reaction L-seryl-[protein] + ATP = 3-O-(5'-adenylyl)-L-seryl-[protein] + diphosphate. The catalysed reaction is L-threonyl-[protein] + ATP = 3-O-(5'-adenylyl)-L-threonyl-[protein] + diphosphate. The enzyme catalyses L-tyrosyl-[protein] + ATP = O-(5'-adenylyl)-L-tyrosyl-[protein] + diphosphate. It catalyses the reaction L-histidyl-[protein] + UTP = N(tele)-(5'-uridylyl)-L-histidyl-[protein] + diphosphate. It carries out the reaction L-seryl-[protein] + UTP = O-(5'-uridylyl)-L-seryl-[protein] + diphosphate. The catalysed reaction is L-tyrosyl-[protein] + UTP = O-(5'-uridylyl)-L-tyrosyl-[protein] + diphosphate. Nucleotidyltransferase involved in the post-translational modification of proteins. It can catalyze the addition of adenosine monophosphate (AMP) or uridine monophosphate (UMP) to a protein, resulting in modifications known as AMPylation and UMPylation. The protein is Protein nucleotidyltransferase YdiU of Methylococcus capsulatus (strain ATCC 33009 / NCIMB 11132 / Bath).